The chain runs to 155 residues: Large ribosomal subunit protein uL11 (155 aa).

The protein belongs to the universal ribosomal protein uL11 family. In terms of assembly, part of the ribosomal stalk of the 50S ribosomal subunit. Interacts with L10 and the large rRNA to form the base of the stalk. L10 forms an elongated spine to which L12 dimers bind in a sequential fashion forming a multimeric L10(L12)X complex. One or more lysine residues are methylated.

Functionally, forms part of the ribosomal stalk which helps the ribosome interact with GTP-bound translation factors. This Malacoplasma penetrans (strain HF-2) (Mycoplasma penetrans) protein is Large ribosomal subunit protein uL11.